The primary structure comprises 272 residues: Centromere protein V-like protein 1 (272 aa).

The span at 1–17 (MGRVRNRATAQRRRRKR) shows a compositional bias: basic residues. Disordered regions lie at residues 1 to 23 (MGRVRNRATAQRRRRKRPGDPPA) and 65 to 95 (RRVRKAGPRDLLPSAPTPDPPGPAPSPKDLD). Positions 79–90 (APTPDPPGPAPS) are enriched in pro residues. Positions 133–246 (HTGGCHCGAV…EEVGGGDPGE (114 aa)) constitute a CENP-V/GFA domain. Zn(2+) is bound by residues C137, C139, C157, C159, C162, C201, and C204. The disordered stretch occupies residues 240–272 (GGGDPGEEAAEEHKAIHKTSSQSAPACPREQEQ).

The protein belongs to the Gfa family. Zn(2+) is required as a cofactor.

This chain is Centromere protein V-like protein 1, found in Homo sapiens (Human).